The primary structure comprises 547 residues: MEKLLHEALQNGCKLHKSVEFIQSRDDNACFGSYIAVAQNDIAPDQLLISCPFEYAITYNKAKEELKKLNPNFESCNPHITLCTFLALESLKGIQSKWYGYIEYLPKTFNTPLYFNENDNAFLISTNAYSAAQERLHIWKHEYQEALSLHPSPTERFTFDLYIWSATVFSSRCFSSNLIYKDSESTPILLPLIDSLNHKPKQPILWNSDFQDEKSVQLISQELVAKGNQLFNNYGPKGNEELLMGYGFCLPDNPFDTVTLKVAIHPDLPHKDQKAAILENDCQFQLSNLVFFLPKSPDKEIFQKILQCLAVVTASSLELRKLTAHLLTGDLASYVPSLRGQIKSLEVLLMYIDSRADLLLKSNPQVSPTSERQVWAKIYRDSQINILQDSITYVKNYMEESLQKTYKPLPNLLQYLILNSISIFLLQHPLFAPLSHAIESLYGSTDAEALVATDEQDILMILICVYCLSISEKLPFSISMLVEGYPAVANPEGVEVFEILDEMFFQQFTNVFGESKHFNKENVSWALQLVNDESLDFSGFTFIIAHN.

In terms of domain architecture, SET spans 17–235 (KSVEFIQSRD…KGNQLFNNYG (219 aa)). Residue Y234 participates in S-adenosyl-L-methionine binding.

This sequence belongs to the class V-like SAM-binding methyltransferase superfamily. RKM1 family.

The protein resides in the cytoplasm. Its subcellular location is the nucleus. Functionally, S-adenosyl-L-methionine-dependent protein-lysine N-methyltransferase that methylates ribosomal protein L23 (rpl23a and rpl23b). This chain is Ribosomal lysine N-methyltransferase set10 (set10), found in Schizosaccharomyces pombe (strain 972 / ATCC 24843) (Fission yeast).